A 122-amino-acid chain; its full sequence is Large ribosomal subunit protein uL14 (122 aa).

Belongs to the universal ribosomal protein uL14 family. In terms of assembly, part of the 50S ribosomal subunit. Forms a cluster with proteins L3 and L19. In the 70S ribosome, L14 and L19 interact and together make contacts with the 16S rRNA in bridges B5 and B8.

Functionally, binds to 23S rRNA. Forms part of two intersubunit bridges in the 70S ribosome. This chain is Large ribosomal subunit protein uL14, found in Mycolicibacterium gilvum (strain PYR-GCK) (Mycobacterium gilvum (strain PYR-GCK)).